Here is a 140-residue protein sequence, read N- to C-terminus: MAIERTFSMIKPDATKRNLTGAITKMLEDAGLRVVASKRVWMSRREAEGFYAVHKERPFFGELVEFMSSGPTIVQVLEGENAIAKNREVMGATNPANADEGTIRKVHALSIGENSVHGSDGPETAAEEIAYWFAGTEIVG.

Residues lysine 11, phenylalanine 59, arginine 87, threonine 93, arginine 104, and asparagine 114 each coordinate ATP. The active-site Pros-phosphohistidine intermediate is the histidine 117.

It belongs to the NDK family. As to quaternary structure, homotetramer. Mg(2+) is required as a cofactor.

The protein resides in the cytoplasm. It catalyses the reaction a 2'-deoxyribonucleoside 5'-diphosphate + ATP = a 2'-deoxyribonucleoside 5'-triphosphate + ADP. The enzyme catalyses a ribonucleoside 5'-diphosphate + ATP = a ribonucleoside 5'-triphosphate + ADP. In terms of biological role, major role in the synthesis of nucleoside triphosphates other than ATP. The ATP gamma phosphate is transferred to the NDP beta phosphate via a ping-pong mechanism, using a phosphorylated active-site intermediate. In Sinorhizobium fredii (strain NBRC 101917 / NGR234), this protein is Nucleoside diphosphate kinase.